The sequence spans 1659 residues: Vitellogenin (1659 aa).

An N-terminal signal peptide occupies residues 1–15 (MRAVVLALTLALVAS). The region spanning 24–662 (FAASKTYVYK…DAATLFPRTV (639 aa)) is the Vitellogenin domain. N-linked (GlcNAc...) asparagine glycosylation occurs at N1089. Low complexity-rich tracts occupy residues 1090-1111 (GTRASSSSSSSSSSSSRSSSSR) and 1119-1129 (SSSSSSSSSSR). Residues 1090 to 1163 (GTRASSSSSS…SQSTSNVISR (74 aa)) are disordered. The 177-residue stretch at 1389 to 1565 (VKCSMVRDTL…SWVLPSDSCR (177 aa)) folds into the VWFD domain. Disulfide bonds link C1391-C1528 and C1414-C1564. N1627 carries an N-linked (GlcNAc...) asparagine glycan.

Post-translationally, phosvitin, an egg yolk storage protein, is one of the most highly phosphorylated (10%) proteins in nature. As to expression, produced by the liver, secreted into the blood and then sequestered by receptor mediated endocytosis into growing oocytes, where it is generally cleaved, giving rise to the respective yolk components lipovitellin-I, phosvitin, lipovitellin-II.

Functionally, precursor of the major egg-yolk proteins that are sources of nutrients during early development of oviparous organisms. This chain is Vitellogenin (vtg1), found in Oncorhynchus mykiss (Rainbow trout).